Reading from the N-terminus, the 23-residue chain is Hemocyanin subunit 1 (23 aa).

The interval 1–23 (DSPGGASDTQKQHXVNSXXXKXY) is disordered.

The protein belongs to the tyrosinase family. Hemocyanin subfamily. In terms of tissue distribution, hemolymph.

Its subcellular location is the secreted. It localises to the extracellular space. Its function is as follows. Hemocyanins are copper-containing oxygen carriers occurring freely dissolved in the hemolymph of many mollusks and arthropods. This is Hemocyanin subunit 1 from Cancer pagurus (Rock crab).